Here is a 174-residue protein sequence, read N- to C-terminus: ATP synthase subunit d, mitochondrial (174 aa).

At Ser2 the chain carries N-acetylserine.

Belongs to the ATPase d subunit family. F-type ATPases have 2 components, CF(1) - the catalytic core - and CF(0) - the membrane proton channel. In yeast, the dimeric form of ATP synthase consists of 17 polypeptides: alpha, beta, gamma, delta, epsilon, 4 (B), 5 (OSCP), 6 (A), 8, 9 (C), d, E (Tim11), f, g, h, i/j and k.

It localises to the mitochondrion. It is found in the mitochondrion inner membrane. Functionally, mitochondrial membrane ATP synthase (F(1)F(0) ATP synthase or Complex V) produces ATP from ADP in the presence of a proton gradient across the membrane which is generated by electron transport complexes of the respiratory chain. F-type ATPases consist of two structural domains, F(1) - containing the extramembraneous catalytic core, and F(0) - containing the membrane proton channel, linked together by a central stalk and a peripheral stalk. During catalysis, ATP synthesis in the catalytic domain of F(1) is coupled via a rotary mechanism of the central stalk subunits to proton translocation. Part of the complex F(0) domain and the peripheric stalk, which acts as a stator to hold the catalytic alpha(3)beta(3) subcomplex and subunit a/ATP6 static relative to the rotary elements. This chain is ATP synthase subunit d, mitochondrial (ATP7), found in Saccharomyces cerevisiae (strain ATCC 204508 / S288c) (Baker's yeast).